Consider the following 475-residue polypeptide: Cysteine--tRNA ligase (475 aa).

Cysteine 28 lines the Zn(2+) pocket. The 'HIGH' region signature appears at 30-40 (PTVYDETHIGH). Zn(2+) contacts are provided by cysteine 208, histidine 233, and glutamate 237. A 'KMSKS' region motif is present at residues 265-269 (KMSKS). Lysine 268 is an ATP binding site.

This sequence belongs to the class-I aminoacyl-tRNA synthetase family. Requires Zn(2+) as cofactor.

The protein resides in the cytoplasm. It catalyses the reaction tRNA(Cys) + L-cysteine + ATP = L-cysteinyl-tRNA(Cys) + AMP + diphosphate. The polypeptide is Cysteine--tRNA ligase (Methanococcus vannielii (strain ATCC 35089 / DSM 1224 / JCM 13029 / OCM 148 / SB)).